The sequence spans 431 residues: MTEPLDLAIIGFGPASLSFLIALHDHSEEPLKNKKIRVFEKLPTFSWHEGMLIPGSNMQISFVKDLATPRDPTSYFTFLNYLHSHGQERLSGFLNMSTLEPSRYEYHDYLCWAASHFSKFVEYNANINKLHYDAATDLYIVGHGDTQWQAKNIIITTGCQPYIPPLYKSVDSPLIVHSSKFMSDHSQKLLRNSKHGILVVGCGQSAAEIWKHCHYSLDPKTPLAMCFRNLAPVPSDSSPFVNSLYFDSHNSHWWYNLPTEARLKGLSVGRTTNYSVVKESLLEEMFKECYLQKLRYGQEFHQIMGDTDIQSIKNEGDHLVVQLTSQMDKSKKPETRKIDVLYVATGYDHESFDVLMSSLFPNSQGAQISEEYCVLNAPSKQGKVYVAGITSNQHGIGETLLSWAAIRAGGLAKELFGPSKPTARVPASYLN.

FAD-binding positions include E40–H48 and Q59. K64 is a binding site for substrate. NADP(+) is bound by residues C202 to S205 and R228. Residues N242–Y245 and N273 contribute to the substrate site. Residue N273–S275 coordinates NADP(+). T399–L401 serves as a coordination point for FAD. A substrate-binding site is contributed by S402.

Belongs to the lysine N(6)-hydroxylase/L-ornithine N(5)-oxygenase family. Requires FAD as cofactor.

The protein localises to the cytoplasm. The protein resides in the nucleus. The enzyme catalyses L-ornithine + NADPH + O2 = N(5)-hydroxy-L-ornithine + NADP(+) + H2O. The catalysed reaction is L-ornithine + NADH + O2 = N(5)-hydroxy-L-ornithine + NAD(+) + H2O. It participates in siderophore biosynthesis; ferrichrome biosynthesis. Functionally, catalyzes the conversion of L-ornithine to N(5)-hydroxyornithine, the first step in the biosynthesis of all hydroxamate-containing siderophores, such as ferrichrome. The protein is L-ornithine N(5)-monooxygenase of Schizosaccharomyces pombe (strain 972 / ATCC 24843) (Fission yeast).